Consider the following 347-residue polypeptide: Peroxidase C2 (347 aa).

Positions 1-24 (MHSSSSLIKLGFLLLLLNVSLSHA) are cleaved as a signal peptide. Cystine bridges form between Cys-35-Cys-115, Cys-68-Cys-73, Cys-121-Cys-325, and Cys-201-Cys-233. The active-site Proton acceptor is His-66. Positions 67, 70, 72, 74, and 76 each coordinate Ca(2+). Asn-81 is a glycosylation site (N-linked (GlcNAc...) asparagine). Residue Pro-163 coordinates substrate. Position 194 (His-194) interacts with heme b. Residue Thr-195 participates in Ca(2+) binding. N-linked (GlcNAc...) asparagine glycosylation is found at Asn-210 and Asn-238. Ca(2+) contacts are provided by Asp-246, Thr-249, and Asp-254.

It belongs to the peroxidase family. Classical plant (class III) peroxidase subfamily. Ca(2+) is required as a cofactor. It depends on heme b as a cofactor.

Its subcellular location is the secreted. The protein localises to the vacuole. The enzyme catalyses 2 a phenolic donor + H2O2 = 2 a phenolic radical donor + 2 H2O. Its function is as follows. Removal of H(2)O(2), oxidation of toxic reductants, biosynthesis and degradation of lignin, suberization, auxin catabolism, response to environmental stresses such as wounding, pathogen attack and oxidative stress. These functions might be dependent on each isozyme/isoform in each plant tissue. This Armoracia rusticana (Horseradish) protein is Peroxidase C2 (PRXC2).